A 325-amino-acid polypeptide reads, in one-letter code: MPPVSSARNLKELPKFRDGLSYLYVEHAVVEREAGGIGIYDQEGLTLAPVAGLGVLFLGPGTRITHAAVRLLAENGCTVAWVGEGMARFYAQGLGDTRSAARFYRQARAWADPALHLEVVMRLYRMRFSEPLPEGLTLEQVRGLEGVRVRNAYARWSRETGVPWYGRSYDRGNWRAADPVNRALSAGASYLYGLAHAAIVSLGFSPALGFIHTGKLLSFVYDIADLYKADYLVPAAFRTVAESEEAVERRVRRALREAIQEGRLLERMAEDLLNLFRGLGLPEEEDPVEEDPTRPGGLWDLEGEVEGGVAYGGDDPGEGAEEPEG.

The Mn(2+) site is built by Glu-145, His-212, and Asp-225. Positions 283–325 are disordered; the sequence is EEEDPVEEDPTRPGGLWDLEGEVEGGVAYGGDDPGEGAEEPEG. Positions 315–325 are enriched in acidic residues; it reads DPGEGAEEPEG.

This sequence belongs to the CRISPR-associated endonuclease Cas1 family. As to quaternary structure, homodimer, forms a heterotetramer with a Cas2 homodimer. The cofactor is Mg(2+). Requires Mn(2+) as cofactor.

Functionally, CRISPR (clustered regularly interspaced short palindromic repeat), is an adaptive immune system that provides protection against mobile genetic elements (viruses, transposable elements and conjugative plasmids). CRISPR clusters contain spacers, sequences complementary to antecedent mobile elements, and target invading nucleic acids. CRISPR clusters are transcribed and processed into CRISPR RNA (crRNA). Acts as a dsDNA endonuclease. Involved in the integration of spacer DNA into the CRISPR cassette. The sequence is that of CRISPR-associated endonuclease Cas1 2 from Thermus thermophilus (strain ATCC 27634 / DSM 579 / HB8).